The sequence spans 540 residues: Glucose-6-phosphate isomerase (540 aa).

Catalysis depends on Glu351, which acts as the Proton donor. Active-site residues include His382 and Lys506.

The protein belongs to the GPI family.

It is found in the cytoplasm. The catalysed reaction is alpha-D-glucose 6-phosphate = beta-D-fructose 6-phosphate. The protein operates within carbohydrate biosynthesis; gluconeogenesis. Its pathway is carbohydrate degradation; glycolysis; D-glyceraldehyde 3-phosphate and glycerone phosphate from D-glucose: step 2/4. In terms of biological role, catalyzes the reversible isomerization of glucose-6-phosphate to fructose-6-phosphate. In Corynebacterium glutamicum (strain ATCC 13032 / DSM 20300 / JCM 1318 / BCRC 11384 / CCUG 27702 / LMG 3730 / NBRC 12168 / NCIMB 10025 / NRRL B-2784 / 534), this protein is Glucose-6-phosphate isomerase.